Consider the following 64-residue polypeptide: Lectin-A (64 aa).

Chitin-binding type-1 domains lie at 1-20 (APECGREAHCGDDCQSQVVT) and 22-45 (DFDDRTCPKLLCCSKDGWCGNTDA).

Glycosylated.

Its function is as follows. N-acetyl-D-glucosamine binding lectin. Shows low hemagglutinating activity towards human erythrocytes. Has low mitogenic activity towards human peripheral blood lymphocytes. This is Lectin-A from Phytolacca americana (American pokeweed).